Here is a 546-residue protein sequence, read N- to C-terminus: Undecaprenyl phosphate-alpha-4-amino-4-deoxy-L-arabinose arabinosyl transferase (546 aa).

The next 12 membrane-spanning stretches (helical) occupy residues 6–26 (INLA…PLGL), 87–107 (AASA…VGRF), 113–133 (AWVT…GTYS), 177–197 (LLTK…PFMI), 208–228 (WGWW…LAIH), 260–280 (YYLP…PSAI), 289–309 (SPLL…FSAA), 313–333 (LVTY…QGII), 345–365 (IGSV…IVLF), 380–400 (PWLL…SIKA), 410–430 (YMLM…NISI), and 450–467 (AILI…NWYF).

This sequence belongs to the glycosyltransferase 83 family.

It localises to the cell inner membrane. It catalyses the reaction 4-amino-4-deoxy-alpha-L-arabinopyranosyl di-trans,octa-cis-undecaprenyl phosphate + lipid IVA = lipid IIA + di-trans,octa-cis-undecaprenyl phosphate.. It functions in the pathway lipopolysaccharide metabolism; 4-amino-4-deoxy-beta-L-arabinose-lipid A biosynthesis. Catalyzes the transfer of the L-Ara4N moiety of the glycolipid undecaprenyl phosphate-alpha-L-Ara4N to lipid A. The modified arabinose is attached to lipid A and is required for resistance to polymyxin and cationic antimicrobial peptides. The polypeptide is Undecaprenyl phosphate-alpha-4-amino-4-deoxy-L-arabinose arabinosyl transferase (Shewanella sediminis (strain HAW-EB3)).